The sequence spans 535 residues: Probable deoxycholate-binding periplasmic protein YgiS (535 aa).

A signal peptide spans 1 to 20; it reads MYTRNLLWLVSLVSAAPLYA.

The protein belongs to the bacterial solute-binding protein 5 family.

Its subcellular location is the periplasm. In terms of biological role, probably part of a deoxycholate transport system. Its expression in the presence of deoxycholate in a ygiS deletion mutant increases intracellular deoxycholate levels and decreases cell growth; higher expression in the presence of deoxycholate inhibits cell growth completely. Bile acid detergents such as deoxycholate are important for host defense against bacterial growth in the gall bladder and duodenum. The protein is Probable deoxycholate-binding periplasmic protein YgiS (ygiS) of Escherichia coli (strain K12).